The sequence spans 346 residues: Elongation factor Ts (346 aa).

The segment at 80-83 is involved in Mg(2+) ion dislocation from EF-Tu; that stretch reads TDFV.

It belongs to the EF-Ts family.

The protein localises to the cytoplasm. In terms of biological role, associates with the EF-Tu.GDP complex and induces the exchange of GDP to GTP. It remains bound to the aminoacyl-tRNA.EF-Tu.GTP complex up to the GTP hydrolysis stage on the ribosome. This Streptococcus pneumoniae (strain 70585) protein is Elongation factor Ts.